We begin with the raw amino-acid sequence, 131 residues long: MATVPTRSGSPRQLTTKQTGDAWEVQARRWLEGKGLRFIAANVNERGGEIDLIMREGRTTVFVEVRYRRSALYGGAAASVTRSKQHKLLQTARLWLARHNGSFDTVDCRFDVVAFTGNEVEWIKDAFNDHS.

Polar residues predominate over residues 1-19 (MATVPTRSGSPRQLTTKQT). The segment at 1–20 (MATVPTRSGSPRQLTTKQTG) is disordered.

This sequence belongs to the UPF0102 family.

The protein is UPF0102 protein YraN of Escherichia coli O17:K52:H18 (strain UMN026 / ExPEC).